The sequence spans 138 residues: Putative pre-16S rRNA nuclease (138 aa).

This sequence belongs to the YqgF nuclease family.

The protein resides in the cytoplasm. Its function is as follows. Could be a nuclease involved in processing of the 5'-end of pre-16S rRNA. In Helicobacter hepaticus (strain ATCC 51449 / 3B1), this protein is Putative pre-16S rRNA nuclease.